Reading from the N-terminus, the 424-residue chain is Serine--tRNA ligase (424 aa).

231–233 (TAE) lines the L-serine pocket. 262–264 (RSE) is a binding site for ATP. Residue Glu285 participates in L-serine binding. 349–352 (EISS) is an ATP binding site. Ser385 lines the L-serine pocket.

The protein belongs to the class-II aminoacyl-tRNA synthetase family. Type-1 seryl-tRNA synthetase subfamily. As to quaternary structure, homodimer. The tRNA molecule binds across the dimer.

Its subcellular location is the cytoplasm. The enzyme catalyses tRNA(Ser) + L-serine + ATP = L-seryl-tRNA(Ser) + AMP + diphosphate + H(+). The catalysed reaction is tRNA(Sec) + L-serine + ATP = L-seryl-tRNA(Sec) + AMP + diphosphate + H(+). It participates in aminoacyl-tRNA biosynthesis; selenocysteinyl-tRNA(Sec) biosynthesis; L-seryl-tRNA(Sec) from L-serine and tRNA(Sec): step 1/1. In terms of biological role, catalyzes the attachment of serine to tRNA(Ser). Is also able to aminoacylate tRNA(Sec) with serine, to form the misacylated tRNA L-seryl-tRNA(Sec), which will be further converted into selenocysteinyl-tRNA(Sec). This Bacillus cytotoxicus (strain DSM 22905 / CIP 110041 / 391-98 / NVH 391-98) protein is Serine--tRNA ligase.